Here is a 305-residue protein sequence, read N- to C-terminus: Glycine--tRNA ligase alpha subunit (305 aa).

This sequence belongs to the class-II aminoacyl-tRNA synthetase family. As to quaternary structure, tetramer of two alpha and two beta subunits.

The protein resides in the cytoplasm. It catalyses the reaction tRNA(Gly) + glycine + ATP = glycyl-tRNA(Gly) + AMP + diphosphate. This chain is Glycine--tRNA ligase alpha subunit (glyQ), found in Vibrio cholerae serotype O1 (strain ATCC 39315 / El Tor Inaba N16961).